A 194-amino-acid polypeptide reads, in one-letter code: PRELI domain containing protein 3B (194 aa).

A PRELI/MSF1 domain is found at 1-172; it reads MKIWTSEHVF…VIHKLNAEIE (172 aa). A phosphoserine mark is found at Ser46 and Ser51.

This sequence belongs to the slowmo family.

The chain is PRELI domain containing protein 3B (PRELID3B) from Homo sapiens (Human).